A 1332-amino-acid chain; its full sequence is MEVEGEVREKEARVKGRQPETEVLHGLPQEQSIFNNMQHNHQPDSDRRRLSLENLPGLYNMSCTQLLALANATVATGSSIGASSSSLSSQHPTDSWINSWKMDSNPWTLSKMQKQQYDVSTPQKFLCDLNLTPEELVSTSTQRTEPESPQITLKTPGKSLSETDHEPHDRIKKSVLGTGSPAAVKKRKIARNDEKSQLETPTLKRKKIRPKVVREGKTKKASSKAGIKKSSIAATATKTSEESNYVRPKRLTRRSIRFDFDLQEEDEEFCGIDFTSAGHVEGSSGEENLTDTTLGMFGHVPKGRRGQRRSNGFKKTDNDCLSSMLSLVNTGPGSFMESEEDRPSDSQISLGRQRSIMATRPRNFRSLKKLLQRIIPSKRDRKGCKLPRGLPKLTVASKLQLKVFRKKRSQRNRVASQFNARILDLQWRRQNPTGTSLADIWERSLTIDAITKLFEELDINKEGLCLPHNRETALILYKKSYEEQKAIVKYSKKQKPKVQLDPETSRVWKLLMSSIDCDGVDGSDEEKRKWWEEERNMFHGRANSFIARMRVVQGNRTFSPWKGSVVDSVVGVFLTQNVADHSSSSAYMDLAAEFPVEWNFNKGSCHEEWGSSVTQETILNLDPRTGVSTPRIRNPTRVIIEEIDDDENDIDAVCSQESSKTSDSSITSADQSKTMLLDPFNTVLMNEQVDSQMVKGKGHIPYTDDLNDLSQGISMVSSASTHCELNLNEVPPEVELCSHQQDPESTIQTQDQQESTRTEDVKKNRKKPTTSKPKKKSKESAKSTQKKSVDWDSLRKEAESGGRKRERTERTMDTVDWDALRCTDVHKIANIIIKRGMNNMLAERIKAFLNRLVKKHGSIDLEWLRDVPPDKAKEYLLSINGLGLKSVECVRLLSLHQIAFPVDTNVGRIAVRLGWVPLQPLPDELQMHLLELYPVLESVQKYLWPRLCKLDQKTLYELHYHMITFGKVFCTKVKPNCNACPMKAECRHYSSARASARLALPEPEESDRTSVMIHERRSKRKPVVVNFRPSLFLYQEKEQEAQRSQNCEPIIEEPASPEPEYIEHDIEDYPRDKNNVGTSEDPWENKDVIPTIILNKEAGTSHDLVVNKEAGTSHDLVVLSTYAAAIPRRKLKIKEKLRTEHHVFELPDHHSILEGFERREAEDIVPYLLAIWTPGETVNSIQPPKQRCALFESNNTLCNENKCFQCNKTREEESQTVRGTILIPCRTAMRGGFPLNGTYFQTNEVFADHDSSINPIDVPTELIWDLKRRVAYLGSSVSSICKGLSVEAIKYNFQEGYVCVRGFDRENRKPKSLVKRLHCSHVAIRTKEKTEE.

Residues 1-23 (MEVEGEVREKEARVKGRQPETEV) show a composition bias toward basic and acidic residues. 3 disordered regions span residues 1–29 (MEVEGEVREKEARVKGRQPETEVLHGLPQ), 137–242 (VSTS…TSEE), and 280–317 (VEGSSGEENLTDTTLGMFGHVPKGRRGQRRSNGFKKTD). Residues 137–153 (VSTSTQRTEPESPQITL) are compositionally biased toward polar residues. Positions 223 to 236 (SKAGIKKSSIAATA) are enriched in low complexity. Residues 301–312 (PKGRRGQRRSNG) are compositionally biased toward basic residues. The segment at 497-595 (KVQLDPETSR…AYMDLAAEFP (99 aa)) is DEMETER. Residues 739-753 (HQQDPESTIQTQDQQ) are compositionally biased toward polar residues. A disordered region spans residues 739-810 (HQQDPESTIQ…GGRKRERTER (72 aa)). Positions 763-777 (KNRKKPTTSKPKKKS) are enriched in basic residues. Residues 787-810 (KSVDWDSLRKEAESGGRKRERTER) show a composition bias toward basic and acidic residues. Residues C970, C977, C980, and C986 each contribute to the [4Fe-4S] cluster site.

It belongs to the DNA glycosylase family. DEMETER subfamily. [4Fe-4S] cluster is required as a cofactor.

Its subcellular location is the nucleus. In terms of biological role, potential transcriptional activator that may act by nicking the target promoter. Catalyzes the release of 5-methylcytosine (5-meC) from DNA by a glycosylase/lyase mechanism. This Arabidopsis thaliana (Mouse-ear cress) protein is DEMETER-like protein 2 (DML2).